The sequence spans 251 residues: uncharacterized protein (251 aa).

The signal sequence occupies residues 1-18 (MKILIILSIILCSLFGRA).

It belongs to the MlaA family.

This is an uncharacterized protein from Rickettsia prowazekii (strain Madrid E).